Consider the following 68-residue polypeptide: MALARAWKQMSWFYYQYLLVTALYMLEPWERTVFNSMLVSIVGMALYTGYVFMPQHIMAILHYFEIVQ.

Over 1–9 the chain is Cytoplasmic; that stretch reads MALARAWKQ. Residues 10 to 26 form a helical membrane-spanning segment; it reads MSWFYYQYLLVTALYML. Residues 27–31 lie on the Lumenal side of the membrane; that stretch reads EPWER. The chain crosses the membrane as a helical span at residues 32–54; sequence TVFNSMLVSIVGMALYTGYVFMP. At 55–68 the chain is on the cytoplasmic side; sequence QHIMAILHYFEIVQ.

It belongs to the SPTSS family. SPTSSA subfamily. In terms of assembly, component of the serine palmitoyltransferase (SPT) complex, which is composed of SPTLC1, SPTLC2 or SPTLC3 and SPTSSA or SPTSSB. The heterodimer consisting of SPTLC1 and SPTLC2/SPTLC3 forms the catalytic core of the enzyme, while SPTSSA or SPTSSB subunits determine substrate specificity. SPT also interacts with ORMDL proteins, especially ORMDL3, which negatively regulate SPT activity in the presence of ceramides. Interacts with MBOAT7; the interaction plays a role in MBOAT7 localization to mitochondria-associated membranes.

It localises to the endoplasmic reticulum membrane. It participates in lipid metabolism; sphingolipid metabolism. Functionally, component of the serine palmitoyltransferase multisubunit enzyme (SPT) that catalyzes the initial and rate-limiting step in sphingolipid biosynthesis by condensing L-serine and activated acyl-CoA (most commonly palmitoyl-CoA) to form long-chain bases. The SPT complex is composed of SPTLC1, SPTLC2 or SPTLC3 and SPTSSA or SPTSSB. Within this complex, the heterodimer consisting of SPTLC1 and SPTLC2/SPTLC3 forms the catalytic core. Within the SPT complex, SPTSSA stimulates the catalytic activity and plays a role in substrate specificity, which depends upon the overall complex composition. The SPTLC1-SPTLC2-SPTSSA complex shows a strong preference for C16-CoA substrate, while the SPTLC1-SPTLC3-SPTSSA isozyme uses both C14-CoA and C16-CoA as substrates, with a slight preference for C14-CoA. Independently of its action as a SPT component, may be involved in MBOAT7 localization to mitochondria-associated membranes, a membrane bridge between the endoplasmic reticulum and mitochondria, may hence affect MBOAT7-catalyzed incorporation of arachidonic acid into phosphatidylinositol. In Bos taurus (Bovine), this protein is Serine palmitoyltransferase small subunit A (SPTSSA).